A 175-amino-acid polypeptide reads, in one-letter code: MSKLVTFSQQRSAWLILMFSALGLEASALYFQYVMLLDPCVMCIYIRVAVLGLILAGLVGSIAPRFWIVRFLGMSLWGVSSAWGAKLSFELYQMQANPSPFSTCSFYPEFPTWMPLDAWMPSIFMPTGMCSDIPWTMMSLSMTQWTLIAFVGYSIAFLLFIYPGLLYKKPTNPYS.

At 1 to 13 (MSKLVTFSQQRSA) the chain is on the cytoplasmic side. A helical membrane pass occupies residues 14 to 30 (WLILMFSALGLEASALY). At 31 to 48 (FQYVMLLDPCVMCIYIRV) the chain is on the periplasmic side. An intrachain disulfide couples Cys40 to Cys43. Residues 49–64 (AVLGLILAGLVGSIAP) traverse the membrane as a helical segment. Residues 65-71 (RFWIVRF) are Cytoplasmic-facing. The helical transmembrane segment at 72 to 89 (LGMSLWGVSSAWGAKLSF) threads the bilayer. Residues 90–144 (ELYQMQANPSPFSTCSFYPEFPTWMPLDAWMPSIFMPTGMCSDIPWTMMSLSMTQ) are Periplasmic-facing. Residues Cys104 and Cys130 are joined by a disulfide bond. Residues 145 to 163 (WTLIAFVGYSIAFLLFIYP) form a helical membrane-spanning segment. Topologically, residues 164-175 (GLLYKKPTNPYS) are cytoplasmic.

The protein belongs to the DsbB family.

Its subcellular location is the cell inner membrane. In terms of biological role, required for disulfide bond formation in some periplasmic proteins. Acts by oxidizing the DsbA protein. This Shewanella denitrificans (strain OS217 / ATCC BAA-1090 / DSM 15013) protein is Disulfide bond formation protein B.